The sequence spans 152 residues: Endoribonuclease YbeY (152 aa).

Residues H113, H117, and H123 each coordinate Zn(2+).

This sequence belongs to the endoribonuclease YbeY family. It depends on Zn(2+) as a cofactor.

The protein localises to the cytoplasm. Single strand-specific metallo-endoribonuclease involved in late-stage 70S ribosome quality control and in maturation of the 3' terminus of the 16S rRNA. In Acidovorax sp. (strain JS42), this protein is Endoribonuclease YbeY.